A 164-amino-acid polypeptide reads, in one-letter code: MSTLDVQTFRDAMACVGAAVNIITTDGPAGQAGFTASAVCSVTDSPPTLLVCLNRGASVWPTFNENRTLCVNTLSAGQEPLSNLFGGKTPMADRFAAARWQTGETGCPRLEDALASFDCRISQVVSVGTHDILFCTIESITRHPAPQGLVWFDRGYHALLRPAC.

Belongs to the non-flavoprotein flavin reductase family. RutF subfamily.

It catalyses the reaction FMNH2 + NAD(+) = FMN + NADH + 2 H(+). Functionally, catalyzes the reduction of FMN to FMNH2 which is used to reduce pyrimidine by RutA via the Rut pathway. The chain is FMN reductase (NADH) RutF from Enterobacter sp. (strain 638).